The sequence spans 664 residues: Protein-arginine deiminase type-3 (664 aa).

The protein belongs to the protein arginine deiminase family. Ca(2+) serves as cofactor. In terms of tissue distribution, hair follicles, and epidermis at very low levels.

The protein localises to the cytoplasm. The enzyme catalyses L-arginyl-[protein] + H2O = L-citrullyl-[protein] + NH4(+). Functionally, catalyzes the deimination of arginine residues of proteins. The sequence is that of Protein-arginine deiminase type-3 (PADI3) from Homo sapiens (Human).